Here is a 349-residue protein sequence, read N- to C-terminus: Anthranilate phosphoribosyltransferase (349 aa).

Residues glycine 82, 85-86 (GD), 92-95 (NVSS), 110-118 (KHGNRAVSG), and serine 122 contribute to the 5-phospho-alpha-D-ribose 1-diphosphate site. Glycine 82 provides a ligand contact to anthranilate. Serine 94 provides a ligand contact to Mg(2+). Residue asparagine 113 participates in anthranilate binding. An anthranilate-binding site is contributed by arginine 168. Aspartate 227 and glutamate 228 together coordinate Mg(2+).

The protein belongs to the anthranilate phosphoribosyltransferase family. Homodimer. The cofactor is Mg(2+).

It catalyses the reaction N-(5-phospho-beta-D-ribosyl)anthranilate + diphosphate = 5-phospho-alpha-D-ribose 1-diphosphate + anthranilate. It participates in amino-acid biosynthesis; L-tryptophan biosynthesis; L-tryptophan from chorismate: step 2/5. Catalyzes the transfer of the phosphoribosyl group of 5-phosphorylribose-1-pyrophosphate (PRPP) to anthranilate to yield N-(5'-phosphoribosyl)-anthranilate (PRA). This Pseudomonas aeruginosa (strain LESB58) protein is Anthranilate phosphoribosyltransferase.